The following is a 296-amino-acid chain: Iron(3+)-hydroxamate-binding protein FhuD (296 aa).

Positions 1 to 30 form a signal peptide, tat-type signal; it reads MSGLPLISRRRLLTAMALSPLLWQMNTAHA. A Fe/B12 periplasmic-binding domain is found at 37 to 296; it reads RIVALEWLPV…VLDNAIGGKA (260 aa). Trp68, Arg84, Ser103, Tyr106, Phe124, Trp217, Trp273, Phe274, and Tyr275 together coordinate Fe(III)-coprogen.

This sequence belongs to the bacterial solute-binding protein 8 family. In terms of assembly, the complex is composed of two ATP-binding proteins (FhuC), a transmembrane protein (FhuB) and a solute-binding protein (FhuD). FhuD interacts with FhuB. Substrate-loaded FhuD binds FhuB more strongly than FhuD alone. Post-translationally, exported by the Tat system. The position of the signal peptide cleavage has been experimentally proven. Can also be exported by the Sec system.

The protein localises to the periplasm. Part of the ABC transporter complex FhuCDB involved in iron(3+)-hydroxamate import. Binds the iron(3+)-hydroxamate complex and transfers it to the membrane-bound permease. Required for the transport of all iron(3+)-hydroxamate siderophores such as ferrichrome, gallichrome, desferrioxamine, coprogen, aerobactin, shizokinen, rhodotorulic acid and the antibiotic albomycin. In Escherichia coli (strain K12), this protein is Iron(3+)-hydroxamate-binding protein FhuD (fhuD).